The chain runs to 155 residues: Small ribosomal subunit protein uS7cz/uS7cy (155 aa).

The protein belongs to the universal ribosomal protein uS7 family. As to quaternary structure, part of the 30S ribosomal subunit.

Its subcellular location is the plastid. The protein localises to the chloroplast. Its function is as follows. One of the primary rRNA binding proteins, it binds directly to 16S rRNA where it nucleates assembly of the head domain of the 30S subunit. The chain is Small ribosomal subunit protein uS7cz/uS7cy (rps7-A) from Nymphaea alba (White water-lily).